Reading from the N-terminus, the 83-residue chain is Mu-theraphotoxin-Hhn2l (83 aa).

An N-terminal signal peptide occupies residues 1–21 (MKASMFLALAGLVLLFVVGYA). The propeptide occupies 22–48 (SESEEKEFPIELLSKIFAVDVFKGEER). Cystine bridges form between cysteine 50/cysteine 65, cysteine 57/cysteine 70, and cysteine 64/cysteine 77. At leucine 81 the chain carries Leucine amide.

The protein belongs to the neurotoxin 10 (Hwtx-1) family. 15 (Hntx-3) subfamily. As to quaternary structure, monomer. In terms of tissue distribution, expressed by the venom gland.

It is found in the secreted. Its function is as follows. Lethal neurotoxin. Selectively blocks tetrodotoxin-sensitive voltage-gated sodium channels (Nav). Does not affect tetrodotoxin-resistant voltage-gated sodium channels or calcium channels. In Cyriopagopus hainanus (Chinese bird spider), this protein is Mu-theraphotoxin-Hhn2l.